The chain runs to 374 residues: Type II methyltransferase M.BbvI (374 aa).

The region spanning 3-347 (FRKGELFCGP…EAVLKTFARI (345 aa)) is the SAM-dependent MTase C5-type domain. Residue Cys92 is part of the active site.

It belongs to the class I-like SAM-binding methyltransferase superfamily. C5-methyltransferase family.

The catalysed reaction is a 2'-deoxycytidine in DNA + S-adenosyl-L-methionine = a 5-methyl-2'-deoxycytidine in DNA + S-adenosyl-L-homocysteine + H(+). A methylase, recognizes the double-stranded sequence 5'-GCAGC-3', methylates C-2 on both strands, and protects the DNA from cleavage by the BbvI endonuclease. This chain is Type II methyltransferase M.BbvI (bbvIM), found in Brevibacillus brevis (Bacillus brevis).